Reading from the N-terminus, the 336-residue chain is Glyceraldehyde-3-phosphate dehydrogenase (336 aa).

NAD(+) contacts are provided by residues 12–13 (RI), aspartate 34, and arginine 79. D-glyceraldehyde 3-phosphate is bound by residues 150-152 (SCT), threonine 181, 210-211 (TG), and arginine 233. Catalysis depends on cysteine 151, which acts as the Nucleophile. NAD(+) is bound at residue asparagine 315.

It belongs to the glyceraldehyde-3-phosphate dehydrogenase family. As to quaternary structure, homotetramer.

Its subcellular location is the cytoplasm. The enzyme catalyses D-glyceraldehyde 3-phosphate + phosphate + NAD(+) = (2R)-3-phospho-glyceroyl phosphate + NADH + H(+). It functions in the pathway carbohydrate degradation; glycolysis; pyruvate from D-glyceraldehyde 3-phosphate: step 1/5. Involved in osmoadaptation. The sequence is that of Glyceraldehyde-3-phosphate dehydrogenase (gpdA) from Emericella nidulans (strain FGSC A4 / ATCC 38163 / CBS 112.46 / NRRL 194 / M139) (Aspergillus nidulans).